We begin with the raw amino-acid sequence, 156 residues long: ATP synthase subunit b (156 aa).

A helical transmembrane segment spans residues 7-27 (LFVQAIVFLILVLFTMKFVWP).

The protein belongs to the ATPase B chain family. In terms of assembly, F-type ATPases have 2 components, F(1) - the catalytic core - and F(0) - the membrane proton channel. F(1) has five subunits: alpha(3), beta(3), gamma(1), delta(1), epsilon(1). F(0) has three main subunits: a(1), b(2) and c(10-14). The alpha and beta chains form an alternating ring which encloses part of the gamma chain. F(1) is attached to F(0) by a central stalk formed by the gamma and epsilon chains, while a peripheral stalk is formed by the delta and b chains.

It localises to the cell inner membrane. In terms of biological role, f(1)F(0) ATP synthase produces ATP from ADP in the presence of a proton or sodium gradient. F-type ATPases consist of two structural domains, F(1) containing the extramembraneous catalytic core and F(0) containing the membrane proton channel, linked together by a central stalk and a peripheral stalk. During catalysis, ATP synthesis in the catalytic domain of F(1) is coupled via a rotary mechanism of the central stalk subunits to proton translocation. Functionally, component of the F(0) channel, it forms part of the peripheral stalk, linking F(1) to F(0). The protein is ATP synthase subunit b of Paracidovorax citrulli (strain AAC00-1) (Acidovorax citrulli).